The sequence spans 253 residues: Small ribosomal subunit protein eS4 (253 aa).

The S4 RNA-binding domain maps to 43 to 114 (LPLLLIVRNV…YPVKFFKLHP (72 aa)).

The protein belongs to the eukaryotic ribosomal protein eS4 family.

This chain is Small ribosomal subunit protein eS4 (rps4e), found in Aeropyrum pernix (strain ATCC 700893 / DSM 11879 / JCM 9820 / NBRC 100138 / K1).